A 485-amino-acid polypeptide reads, in one-letter code: Glycogen synthase (485 aa).

Lysine 15 serves as a coordination point for ADP-alpha-D-glucose.

This sequence belongs to the glycosyltransferase 1 family. Bacterial/plant glycogen synthase subfamily.

The catalysed reaction is [(1-&gt;4)-alpha-D-glucosyl](n) + ADP-alpha-D-glucose = [(1-&gt;4)-alpha-D-glucosyl](n+1) + ADP + H(+). The protein operates within glycan biosynthesis; glycogen biosynthesis. Functionally, synthesizes alpha-1,4-glucan chains using ADP-glucose. The chain is Glycogen synthase (glgA) from Geobacillus stearothermophilus (Bacillus stearothermophilus).